The chain runs to 124 residues: Small ribosomal subunit protein uS13 (124 aa).

Positions 96–124 (LPVRGQRTKTNARTRKGPRRTVAGKKKAK) are disordered.

It belongs to the universal ribosomal protein uS13 family. Part of the 30S ribosomal subunit. Forms a loose heterodimer with protein S19. Forms two bridges to the 50S subunit in the 70S ribosome.

Its function is as follows. Located at the top of the head of the 30S subunit, it contacts several helices of the 16S rRNA. In the 70S ribosome it contacts the 23S rRNA (bridge B1a) and protein L5 of the 50S subunit (bridge B1b), connecting the 2 subunits; these bridges are implicated in subunit movement. Contacts the tRNAs in the A and P-sites. The chain is Small ribosomal subunit protein uS13 from Symbiobacterium thermophilum (strain DSM 24528 / JCM 14929 / IAM 14863 / T).